The following is a 273-amino-acid chain: HTH-type transcriptional activator RhaS (273 aa).

The 99-residue stretch at 174–272 (YQLLDWLQNN…SQSPRDLRSQ (99 aa)) folds into the HTH araC/xylS-type domain. 2 consecutive DNA-binding regions (H-T-H motif) follow at residues 191-212 (PELA…KNKT) and 239-262 (VTDI…KREF).

Binds DNA as a dimer.

Its subcellular location is the cytoplasm. Functionally, activates expression of the rhaBAD and rhaT operons. This chain is HTH-type transcriptional activator RhaS, found in Yersinia pseudotuberculosis serotype O:1b (strain IP 31758).